We begin with the raw amino-acid sequence, 241 residues long: MEIIPAIDIKDGRCVRLYQGDFAQMTVYADDPVAVARRWQAQGATRIHVVDLDGARTGRPQNVDAVLAITQTVQIPVQLGGGLRREEDVAAALALGVERVIIGTAAIVETELVARLLERFGERIIIGIDARNGMVATDGWTVTSTIAATDLAGQMAALGARRFIYTDISRDGALSGPNFTALAELVKPDGPAIIASGGIANLDHIRQLAQIGVEGVIIGKALYTGAIYLPEAIAIAQTATG.

Aspartate 8 (proton acceptor) is an active-site residue. Aspartate 129 (proton donor) is an active-site residue.

It belongs to the HisA/HisF family.

The protein localises to the cytoplasm. The catalysed reaction is 1-(5-phospho-beta-D-ribosyl)-5-[(5-phospho-beta-D-ribosylamino)methylideneamino]imidazole-4-carboxamide = 5-[(5-phospho-1-deoxy-D-ribulos-1-ylimino)methylamino]-1-(5-phospho-beta-D-ribosyl)imidazole-4-carboxamide. It functions in the pathway amino-acid biosynthesis; L-histidine biosynthesis; L-histidine from 5-phospho-alpha-D-ribose 1-diphosphate: step 4/9. In Chloroflexus aggregans (strain MD-66 / DSM 9485), this protein is 1-(5-phosphoribosyl)-5-[(5-phosphoribosylamino)methylideneamino] imidazole-4-carboxamide isomerase.